The primary structure comprises 177 residues: Large ribosomal subunit protein uL5 (177 aa).

It belongs to the universal ribosomal protein uL5 family. Part of the 50S ribosomal subunit; part of the 5S rRNA/L5/L18/L25 subcomplex. Contacts the 5S rRNA and the P site tRNA. Forms a bridge to the 30S subunit in the 70S ribosome.

In terms of biological role, this is one of the proteins that bind and probably mediate the attachment of the 5S RNA into the large ribosomal subunit, where it forms part of the central protuberance. In the 70S ribosome it contacts protein S13 of the 30S subunit (bridge B1b), connecting the 2 subunits; this bridge is implicated in subunit movement. Contacts the P site tRNA; the 5S rRNA and some of its associated proteins might help stabilize positioning of ribosome-bound tRNAs. The chain is Large ribosomal subunit protein uL5 from Wolbachia pipientis wMel.